Consider the following 234-residue polypeptide: Sugar fermentation stimulation protein homolog (234 aa).

The protein belongs to the SfsA family.

The sequence is that of Sugar fermentation stimulation protein homolog from Shewanella baltica (strain OS195).